Here is a 545-residue protein sequence, read N- to C-terminus: Acetamidase (545 aa).

Active-site charge relay system residues include K130 and S205. Catalysis depends on S229, which acts as the Acyl-ester intermediate.

This sequence belongs to the amidase family.

It carries out the reaction a monocarboxylic acid amide + H2O = a monocarboxylate + NH4(+). It catalyses the reaction acetamide + H2O = acetate + NH4(+). Functionally, allows acetamide to be used as a sole carbon or nitrogen source. The chain is Acetamidase (amdS) from Aspergillus oryzae (strain ATCC 42149 / RIB 40) (Yellow koji mold).